We begin with the raw amino-acid sequence, 294 residues long: HTH-type transcriptional regulator ClcR (294 aa).

Positions 1–58 (MEFRQLRYFIAVAEEGNIGAAARRLHISQPPITRQIQALEQDLGVVLFERTHRGVELT) constitute an HTH lysR-type domain. Residues 18–37 (IGAAARRLHISQPPITRQIQ) constitute a DNA-binding region (H-T-H motif).

It belongs to the LysR transcriptional regulatory family.

It is found in the cytoplasm. Functionally, involved in regulation of chlorinated catechol metabolism. Transcriptional activator of the clcABD chlorocatechol oxidative operon. This is HTH-type transcriptional regulator ClcR (clcR) from Pseudomonas putida (Arthrobacter siderocapsulatus).